Consider the following 355-residue polypeptide: Peptide chain release factor 1 (355 aa).

An N5-methylglutamine modification is found at Gln232.

It belongs to the prokaryotic/mitochondrial release factor family. In terms of processing, methylated by PrmC. Methylation increases the termination efficiency of RF1.

The protein resides in the cytoplasm. Functionally, peptide chain release factor 1 directs the termination of translation in response to the peptide chain termination codons UAG and UAA. The chain is Peptide chain release factor 1 from Kineococcus radiotolerans (strain ATCC BAA-149 / DSM 14245 / SRS30216).